The following is a 572-amino-acid chain: E3 SUMO-protein ligase PIAS2 (572 aa).

In terms of domain architecture, SAP spans 11-45; that stretch reads VSSFRVSELQVLLGFAGRNKSGRKHDLLMRALHLL. An LXXLL motif motif is present at residues 19-23; that stretch reads LQVLL. Glycyl lysine isopeptide (Lys-Gly) (interchain with G-Cter in SUMO2) cross-links involve residues Lys-46 and Lys-249. In terms of domain architecture, PINIT spans 134-299; it reads QPSPPIPPVH…SMSVYLVRQL (166 aa). An SP-RING-type zinc finger spans residues 331–412; sequence PDSEIATTSL…FMEILNDCSD (82 aa). Zn(2+)-binding residues include Cys-362, His-364, Cys-385, and Cys-388. Residues Lys-430, Lys-435, Lys-443, and Lys-452 each participate in a glycyl lysine isopeptide (Lys-Gly) (interchain with G-Cter in SUMO2) cross-link. Positions 467 to 473 are SUMO1-binding; that stretch reads IDVIDLT. Residues Ser-476, Ser-477, and Ser-478 each carry the phosphoserine modification. The Nuclear localization signal signature appears at 484 to 492; it reads PPAKRKCIF. Lys-489 participates in a covalent cross-link: Glycyl lysine isopeptide (Lys-Gly) (interchain with G-Cter in SUMO2). Phosphoserine is present on Ser-499. Residue Lys-502 forms a Glycyl lysine isopeptide (Lys-Gly) (interchain with G-Cter in SUMO2) linkage. A disordered region spans residues 523–572; the sequence is AAIPPSLTDYSVPFHHTPVSSMSSDLPGEQRRNDINNEVQLGTSSDTVQQ. Over residues 558–572 the composition is skewed to polar residues; it reads NNEVQLGTSSDTVQQ.

It belongs to the PIAS family. In terms of assembly, binds SUMO1 and UBE2I. Interacts with AXIN1, JUN, MDM2, PARK7, TP53 and TP73 isoform alpha, but not TP73 isoform beta. Interacts with STAT4 following IL12 and IFN-alpha stimulation of T-cells. Interacts also with GTF2I, GTF2IRD1, IKFZ1, DAB2 and MSX2, as well as with several steroid receptors, including ESR1, ESR2, NR3C1, PGR, AR, and with NCOA2. Sumoylation of a target protein seems to enhance the interaction. Binds to sumoylated ELK1. Binds DNA, such as CDKN1A promoter, in a sequence-specific manner. Interacts with PLAG1. Interacts with KLF8; the interaction results in SUMO ligation and repression of KLF8 transcriptional activity and of its cell cycle progression into G(1) phase. Interacts with IFIH1/MDA5. Interacts with PML. Interacts with PRDM1. Post-translationally, sumoylated. As to expression, mainly expressed in testis.

It is found in the nucleus speckle. The protein resides in the nucleus. Its subcellular location is the PML body. It functions in the pathway protein modification; protein sumoylation. Functionally, functions as an E3-type small ubiquitin-like modifier (SUMO) ligase, stabilizing the interaction between UBE2I and the substrate, and as a SUMO-tethering factor. Plays a crucial role as a transcriptional coregulation in various cellular pathways, including the STAT pathway, the p53 pathway and the steroid hormone signaling pathway. The effects of this transcriptional coregulation, transactivation or silencing may vary depending upon the biological context and PIAS2 isoform studied. However, it seems to be mostly involved in gene silencing. Binds to sumoylated ELK1 and enhances its transcriptional activity by preventing recruitment of HDAC2 by ELK1, thus reversing SUMO-mediated repression of ELK1 transactivation activity. Sumoylates PML at'Lys-65' and 'Lys-160'. The sequence is that of E3 SUMO-protein ligase PIAS2 (Pias2) from Rattus norvegicus (Rat).